A 174-amino-acid chain; its full sequence is Large ribosomal subunit protein uL18 (174 aa).

The protein belongs to the universal ribosomal protein uL18 family. Part of the 50S ribosomal subunit. Contacts the 5S and 23S rRNAs.

Its function is as follows. This is one of the proteins that bind and probably mediate the attachment of the 5S RNA into the large ribosomal subunit, where it forms part of the central protuberance. This chain is Large ribosomal subunit protein uL18, found in Methanocorpusculum labreanum (strain ATCC 43576 / DSM 4855 / Z).